Consider the following 300-residue polypeptide: 3-dehydrocarnitine:acetyl-CoA trimethylamine transferase (300 aa).

Positions 51, 53, and 254 each coordinate Zn(2+).

The protein belongs to the BKACE family. Homotetramer. Zn(2+) is required as a cofactor.

It carries out the reaction 3-dehydrocarnitine + acetyl-CoA = N,N,N-trimethylglycyl-CoA + acetoacetate. It participates in amine and polyamine metabolism; carnitine metabolism. Catalyzes the condensation of dehydrocarnitine and acetyl-CoA, forming acetoacetate and betainyl-CoA (N,N,N-trimethylglycyl-CoA). Is involved in a L-carnitine degradation pathway that allows R.meliloti to grow on L-carnitine as the sole source of carbon and nitrogen. This chain is 3-dehydrocarnitine:acetyl-CoA trimethylamine transferase, found in Rhizobium meliloti (strain 1021) (Ensifer meliloti).